We begin with the raw amino-acid sequence, 156 residues long: Small ribosomal subunit protein uS7 (156 aa).

It belongs to the universal ribosomal protein uS7 family. Part of the 30S ribosomal subunit. Contacts proteins S9 and S11.

In terms of biological role, one of the primary rRNA binding proteins, it binds directly to 16S rRNA where it nucleates assembly of the head domain of the 30S subunit. Is located at the subunit interface close to the decoding center, probably blocks exit of the E-site tRNA. The polypeptide is Small ribosomal subunit protein uS7 (Clostridium novyi (strain NT)).